Here is a 470-residue protein sequence, read N- to C-terminus: Methylenetetrahydrofolate--tRNA-(uracil-5-)-methyltransferase TrmFO (470 aa).

An FAD-binding site is contributed by Gly10–Gly15.

Belongs to the MnmG family. TrmFO subfamily. Requires FAD as cofactor.

The protein localises to the cytoplasm. It carries out the reaction uridine(54) in tRNA + (6R)-5,10-methylene-5,6,7,8-tetrahydrofolate + NADH + H(+) = 5-methyluridine(54) in tRNA + (6S)-5,6,7,8-tetrahydrofolate + NAD(+). The catalysed reaction is uridine(54) in tRNA + (6R)-5,10-methylene-5,6,7,8-tetrahydrofolate + NADPH + H(+) = 5-methyluridine(54) in tRNA + (6S)-5,6,7,8-tetrahydrofolate + NADP(+). In terms of biological role, catalyzes the folate-dependent formation of 5-methyl-uridine at position 54 (M-5-U54) in all tRNAs. The sequence is that of Methylenetetrahydrofolate--tRNA-(uracil-5-)-methyltransferase TrmFO from Prochlorococcus marinus (strain MIT 9301).